We begin with the raw amino-acid sequence, 284 residues long: Acetylglutamate kinase (284 aa).

Substrate-binding positions include 66–67 (GG), Arg88, and Asn179.

This sequence belongs to the acetylglutamate kinase family. ArgB subfamily.

The protein localises to the cytoplasm. The enzyme catalyses N-acetyl-L-glutamate + ATP = N-acetyl-L-glutamyl 5-phosphate + ADP. The protein operates within amino-acid biosynthesis; L-arginine biosynthesis; N(2)-acetyl-L-ornithine from L-glutamate: step 2/4. Functionally, catalyzes the ATP-dependent phosphorylation of N-acetyl-L-glutamate. The chain is Acetylglutamate kinase from Actinobacillus pleuropneumoniae serotype 7 (strain AP76).